A 532-amino-acid chain; its full sequence is Protoporphyrinogen oxidase (532 aa).

Residues 9-14 (GSGISG), I289, and 511-513 (VGI) contribute to the FAD site.

It belongs to the protoporphyrinogen/coproporphyrinogen oxidase family. Protoporphyrinogen oxidase subfamily. It depends on FAD as a cofactor.

The protein resides in the mitochondrion. The enzyme catalyses protoporphyrinogen IX + 3 O2 = protoporphyrin IX + 3 H2O2. It functions in the pathway porphyrin-containing compound metabolism; protoporphyrin-IX biosynthesis; protoporphyrin-IX from protoporphyrinogen-IX: step 1/1. Functionally, catalyzes the 6-electron oxidation of protoporphyrinogen-IX to form protoporphyrin-IX. The chain is Protoporphyrinogen oxidase (ppox) from Dictyostelium discoideum (Social amoeba).